Consider the following 1174-residue polypeptide: Tyrosine-protein phosphatase non-receptor type 21 (1174 aa).

The FERM domain occupies 23–308 (LVARIQLLNN…ARHKFYRLNQ (286 aa)). Positions 396-423 (SAHSTNSLNNPQPYLQPSPMSSNPSITG) are enriched in polar residues. The segment at 396–445 (SAHSTNSLNNPQPYLQPSPMSSNPSITGSDVMRPDYLPSHRHSAVIPPSY) is disordered. 5 positions are modified to phosphoserine: serine 577, serine 589, serine 590, serine 637, and serine 673. The segment at 673–692 (SQPSVFTERTQREGPEEAEG) is disordered. The segment covering 681–692 (RTQREGPEEAEG) has biased composition (basic and acidic residues). Residues serine 710 and serine 711 each carry the phosphoserine modification. Disordered stretches follow at residues 711-745 (SEEE…DPPG) and 769-806 (KRMM…TSGR). Positions 712–722 (EEEEDEDFEEE) are enriched in acidic residues. Residues 796 to 805 (MSESDLTTSG) are compositionally biased toward polar residues. Residues serine 797, serine 799, and serine 804 each carry the phosphoserine modification. One can recognise a Tyrosine-protein phosphatase domain in the interval 896-1167 (VFTEYERILK…TFVYRVLIQF (272 aa)). Substrate is bound by residues glutamate 1067, 1108-1114 (CSAGVGR), and glutamine 1152. Cysteine 1108 serves as the catalytic Phosphocysteine intermediate.

This sequence belongs to the protein-tyrosine phosphatase family. Non-receptor class subfamily.

The protein resides in the cytoplasm. It is found in the cytoskeleton. It catalyses the reaction O-phospho-L-tyrosyl-[protein] + H2O = L-tyrosyl-[protein] + phosphate. This is Tyrosine-protein phosphatase non-receptor type 21 (PTPN21) from Homo sapiens (Human).